The following is a 250-amino-acid chain: uncharacterized protein (250 aa).

This is an uncharacterized protein from Sulfolobus islandicus filamentous virus (isolate Iceland/Hveragerdi) (SIFV).